Here is a 70-residue protein sequence, read N- to C-terminus: Putative membrane protein insertion efficiency factor (70 aa).

Belongs to the UPF0161 family.

The protein localises to the cell inner membrane. Its function is as follows. Could be involved in insertion of integral membrane proteins into the membrane. The chain is Putative membrane protein insertion efficiency factor from Sphingopyxis alaskensis (strain DSM 13593 / LMG 18877 / RB2256) (Sphingomonas alaskensis).